The chain runs to 269 residues: Formamidopyrimidine-DNA glycosylase (269 aa).

The active-site Schiff-base intermediate with DNA is P2. E3 (proton donor) is an active-site residue. The Proton donor; for beta-elimination activity role is filled by K58. Positions 91, 110, and 150 each coordinate DNA. The FPG-type zinc finger occupies 235 to 269 (SVYGCKNKKCYRCKGIIIKFVQNQRSTFYCKKCQT). Residue R259 is the Proton donor; for delta-elimination activity of the active site.

It belongs to the FPG family. In terms of assembly, monomer. Requires Zn(2+) as cofactor.

The catalysed reaction is Hydrolysis of DNA containing ring-opened 7-methylguanine residues, releasing 2,6-diamino-4-hydroxy-5-(N-methyl)formamidopyrimidine.. It carries out the reaction 2'-deoxyribonucleotide-(2'-deoxyribose 5'-phosphate)-2'-deoxyribonucleotide-DNA = a 3'-end 2'-deoxyribonucleotide-(2,3-dehydro-2,3-deoxyribose 5'-phosphate)-DNA + a 5'-end 5'-phospho-2'-deoxyribonucleoside-DNA + H(+). Functionally, involved in base excision repair of DNA damaged by oxidation or by mutagenic agents. Acts as a DNA glycosylase that recognizes and removes damaged bases. Has a preference for oxidized purines, such as 7,8-dihydro-8-oxoguanine (8-oxoG). Has AP (apurinic/apyrimidinic) lyase activity and introduces nicks in the DNA strand. Cleaves the DNA backbone by beta-delta elimination to generate a single-strand break at the site of the removed base with both 3'- and 5'-phosphates. This Vesicomyosocius okutanii subsp. Calyptogena okutanii (strain HA) protein is Formamidopyrimidine-DNA glycosylase.